Consider the following 35-residue polypeptide: MFDTNSTRLPIWGIGCNPWTAEHVDQTLVSGNDIC.

A propeptide spanning residues 1 to 10 (MFDTNSTRLP) is cleaved from the precursor. Isoleucine 11 carries the post-translational modification (3R,4R)-4,5-dihydroxyisoleucine; in form alpha-amanitin. Isoleucine 11 carries the (3R,4S)-4-hydroxyisoleucine; in form gamma-amanitin modification. The segment at residues 11–18 (IWGIGCNP) is a cross-link (cyclopeptide (Ile-Pro)). The 2'-cysteinyl-6'-hydroxytryptophan sulfoxide (Trp-Cys) cross-link spans 12 to 16 (WGIGC). Proline 18 carries the post-translational modification 4-hydroxyproline. The propeptide occupies 19 to 35 (WTAEHVDQTLVSGNDIC).

This sequence belongs to the MSDIN fungal toxin family. In terms of processing, processed by the macrocyclase-peptidase enzyme POPB to yield a toxic bicyclic octapeptide. POPB first removes 10 residues from the N-terminus. Conformational trapping of the remaining peptide forces the enzyme to release this intermediate rather than proceed to macrocyclization. The enzyme rebinds the remaining peptide in a different conformation and catalyzes macrocyclization of the N-terminal 8 residues.

Major toxin belonging to the bicyclic octapeptides amatoxins that acts by binding non-competitively to RNA polymerase II and greatly slowing the elongation of transcripts from target promoters. This chain is Alpha-amanitin proprotein 2, found in Galerina marginata (strain CBS 339.88).